Reading from the N-terminus, the 452-residue chain is Adenylosuccinate synthetase isozyme 1 (452 aa).

Residues 1–22 are disordered; that stretch reads MSGTRASNDRSSHPGGHKRPRY. Residues 37 to 43 and 65 to 67 each bind GTP; these read GDEGKGK and GHT. Residue aspartate 38 is the Proton acceptor of the active site. Mg(2+) is bound by residues aspartate 38 and glycine 65. Residue aspartate 38 participates in substrate binding. Residues 38–41, 63–66, threonine 158, arginine 172, asparagine 251, threonine 266, and arginine 330 each bind IMP; these read DEGK and NAGH. Catalysis depends on histidine 66, which acts as the Proton donor. Residue 326-332 coordinates substrate; that stretch reads VTTGRKR. GTP is bound by residues arginine 332, 358 to 360, and 440 to 443; these read KLD and GVGK.

This sequence belongs to the adenylosuccinate synthetase family. In terms of assembly, homodimer. Mg(2+) serves as cofactor.

It is found in the cytoplasm. It carries out the reaction IMP + L-aspartate + GTP = N(6)-(1,2-dicarboxyethyl)-AMP + GDP + phosphate + 2 H(+). It functions in the pathway purine metabolism; AMP biosynthesis via de novo pathway; AMP from IMP: step 1/2. Its function is as follows. Component of the purine nucleotide cycle (PNC), which interconverts IMP and AMP to regulate the nucleotide levels in various tissues, and which contributes to glycolysis and ammoniagenesis. Catalyzes the first committed step in the biosynthesis of AMP from IMP. This Xenopus tropicalis (Western clawed frog) protein is Adenylosuccinate synthetase isozyme 1 (adss1).